A 456-amino-acid chain; its full sequence is tRNA modification GTPase MnmE (456 aa).

3 residues coordinate (6S)-5-formyl-5,6,7,8-tetrahydrofolate: Arg-24, Glu-81, and Lys-120. The TrmE-type G domain occupies 216–379 (GMKVVIAGRP…LREHLKECIG (164 aa)). Asn-226 is a K(+) binding site. GTP-binding positions include 226-231 (NAGKSS), 245-251 (TAIEGTT), and 270-273 (DTAG). Ser-230 is a Mg(2+) binding site. K(+) contacts are provided by Thr-245, Ile-247, and Thr-250. Residue Thr-251 participates in Mg(2+) binding. Lys-456 contributes to the (6S)-5-formyl-5,6,7,8-tetrahydrofolate binding site.

This sequence belongs to the TRAFAC class TrmE-Era-EngA-EngB-Septin-like GTPase superfamily. TrmE GTPase family. Homodimer. Heterotetramer of two MnmE and two MnmG subunits. K(+) serves as cofactor.

Its subcellular location is the cytoplasm. Exhibits a very high intrinsic GTPase hydrolysis rate. Involved in the addition of a carboxymethylaminomethyl (cmnm) group at the wobble position (U34) of certain tRNAs, forming tRNA-cmnm(5)s(2)U34. The sequence is that of tRNA modification GTPase MnmE from Marinobacter nauticus (strain ATCC 700491 / DSM 11845 / VT8) (Marinobacter aquaeolei).